A 363-amino-acid chain; its full sequence is Outer membrane porin C (363 aa).

A signal peptide spans 1–21 (MKVKVLSLLVPALLVAGAANA). The segment covering 174–187 (NGSASGEDQTNNGR) has biased composition (polar residues). Residues 174–195 (NGSASGEDQTNNGRTELRQNGD) form a disordered region.

It belongs to the Gram-negative porin family. As to quaternary structure, homotrimer. Probably forms mixed heterotrimers with OmpF; other mixed heterotrimers are also probable.

The protein localises to the cell outer membrane. Its function is as follows. Forms pores that allow passive diffusion of small molecules across the outer membrane. In terms of biological role, (Microbial infection) Binds CdiA-EC536, probably acts as the outer membrane receptor for toxin CdiA-EC536 with OmpF. The chain is Outer membrane porin C (ompC) from Enterobacter cloacae subsp. cloacae (strain ATCC 13047 / DSM 30054 / NBRC 13535 / NCTC 10005 / WDCM 00083 / NCDC 279-56).